Reading from the N-terminus, the 173-residue chain is Shikimate kinase 1 (173 aa).

14–19 serves as a coordination point for ATP; it reads GAGKST. Residue serine 18 participates in Mg(2+) binding. 3 residues coordinate substrate: aspartate 36, arginine 60, and glycine 82. An ATP-binding site is contributed by arginine 120. Arginine 140 provides a ligand contact to substrate.

It belongs to the shikimate kinase family. In terms of assembly, monomer. Mg(2+) is required as a cofactor.

It localises to the cytoplasm. It carries out the reaction shikimate + ATP = 3-phosphoshikimate + ADP + H(+). Its pathway is metabolic intermediate biosynthesis; chorismate biosynthesis; chorismate from D-erythrose 4-phosphate and phosphoenolpyruvate: step 5/7. Its function is as follows. Catalyzes the specific phosphorylation of the 3-hydroxyl group of shikimic acid using ATP as a cosubstrate. The polypeptide is Shikimate kinase 1 (Hamiltonella defensa subsp. Acyrthosiphon pisum (strain 5AT)).